Consider the following 120-residue polypeptide: Holo-[acyl-carrier-protein] synthase (120 aa).

The Mg(2+) site is built by Asp8 and Glu58.

This sequence belongs to the P-Pant transferase superfamily. AcpS family. Mg(2+) serves as cofactor.

The protein localises to the cytoplasm. It catalyses the reaction apo-[ACP] + CoA = holo-[ACP] + adenosine 3',5'-bisphosphate + H(+). Functionally, transfers the 4'-phosphopantetheine moiety from coenzyme A to a Ser of acyl-carrier-protein. The chain is Holo-[acyl-carrier-protein] synthase from Anoxybacillus flavithermus (strain DSM 21510 / WK1).